The primary structure comprises 236 residues: MSFLKSFPPPGPTEGLRHQQPDTEAVLNGKGLGTGTLYIAESRLSWLDGSGLGFSLEYPTISLHAVSRDPNAYPQEHLYVMVNAKFGEESKELVADEEEDSDDDVEPISEFRFVPGDKSALEAMFTAMCECQALHPDPEDEDSDDYDGEEYDVEAHEQGQGDIPTFYTYEEGLSHLTAEGQATLERLEGMLSQSVSSQYNMAGVRTEDSIRDYEDGMEVDTTPTVAGQFEDADVDH.

Residues 1 to 20 (MSFLKSFPPPGPTEGLRHQQ) are disordered. Serine 2 bears the N-acetylserine mark. Residues serine 101, serine 143, serine 192, serine 194, serine 197, and serine 209 each carry the phosphoserine modification. At threonine 222 the chain carries Phosphothreonine.

It belongs to the pICln (TC 1.A.47) family. Component of the methylosome, a 20S complex containing at least PRMT5/SKB1, WDR77/MEP50 and CLNS1A/pICln. May mediate SNRPD1 and SNRPD3 methylation. Forms a 6S pICln-Sm complex composed of CLNS1A/pICln, SNRPD1, SNRPD2, SNRPE, SNRPF and SNRPG; ring-like structure where CLNS1A/pICln mimics additional Sm proteins and which is unable to assemble into the core snRNP. Interacts with LSM10 and LSM11. In terms of tissue distribution, widely distributed but expressed more abundantly in nonpigmented ciliary epithelial cells than in pigmented ones.

It is found in the cytoplasm. The protein localises to the cytosol. The protein resides in the nucleus. Its subcellular location is the cytoskeleton. Functionally, involved in both the assembly of spliceosomal snRNPs and the methylation of Sm proteins. Chaperone that regulates the assembly of spliceosomal U1, U2, U4 and U5 small nuclear ribonucleoproteins (snRNPs), the building blocks of the spliceosome, and thereby plays an important role in the splicing of cellular pre-mRNAs. Most spliceosomal snRNPs contain a common set of Sm proteins SNRPB, SNRPD1, SNRPD2, SNRPD3, SNRPE, SNRPF and SNRPG that assemble in a heptameric protein ring on the Sm site of the small nuclear RNA to form the core snRNP (Sm core). In the cytosol, the Sm proteins SNRPD1, SNRPD2, SNRPE, SNRPF and SNRPG are trapped in an inactive 6S pICln-Sm complex by the chaperone CLNS1A that controls the assembly of the core snRNP. Dissociation by the SMN complex of CLNS1A from the trapped Sm proteins and their transfer to an SMN-Sm complex triggers the assembly of core snRNPs and their transport to the nucleus. This chain is Methylosome subunit pICln (CLNS1A), found in Oryctolagus cuniculus (Rabbit).